A 377-amino-acid polypeptide reads, in one-letter code: Exopolygalacturonase (377 aa).

An N-terminal signal peptide occupies residues 1–5 (RGVQS). PbH1 repeat units lie at residues 159 to 184 (CEDITFQHVTVTAPGTSINTDGIHVG), 186 to 207 (SKGVTITNTKIATGDDCISIGP), 209 to 229 (SQNVTITQVNCGPGHGISIGS), 239 to 260 (VRGITVKGCTFSGTMNGVRVKT), and 269 to 290 (ATDLTFQDLTMNNVQNPVILDQ). The Proton donor role is filled by Asp200. A glycan (N-linked (GlcNAc...) asparagine) is linked at Asn211. His223 is an active-site residue. Residue Asn345 is glycosylated (N-linked (GlcNAc...) asparagine).

This sequence belongs to the glycosyl hydrolase 28 family. In terms of assembly, monomer. Post-translationally, glycosylated. In terms of tissue distribution, expressed in pollen (at protein level). Expressed in stem, but not in leaves (at protein level).

Its subcellular location is the secreted. The protein resides in the cell wall. It localises to the golgi apparatus. It is found in the endoplasmic reticulum. The protein localises to the vesicle. The enzyme catalyses [(1-&gt;4)-alpha-D-galacturonosyl](n) + H2O = alpha-D-galacturonate + [(1-&gt;4)-alpha-D-galacturonosyl](n-1). Functionally, may function in depolymerizing pectin during pollen development, germination, and tube growth. Acts as an exo-polygalacturonase. The chain is Exopolygalacturonase from Platanus acerifolia (London plane tree).